We begin with the raw amino-acid sequence, 421 residues long: O-acetyl-L-homoserine sulfhydrylase 1 (421 aa).

N6-(pyridoxal phosphate)lysine is present on Lys-206.

The protein belongs to the trans-sulfuration enzymes family. In terms of assembly, homotetramer. It depends on pyridoxal 5'-phosphate as a cofactor.

It catalyses the reaction O-acetyl-L-homoserine + hydrogen sulfide = L-homocysteine + acetate. The protein operates within amino-acid biosynthesis; L-methionine biosynthesis via de novo pathway; L-homocysteine from O-acetyl-L-homoserine: step 1/1. Its activity is regulated as follows. Inhibited by the carbonyl reagents hydroxylamine and phenylhydrazine. Also inhibited by methionine and propargylglycine. In terms of biological role, catalyzes the conversion of O-acetyl-L-homoserine (OAH) into homocysteine in the methionine biosynthesis pathway. Has weak activity with O-acetyl-L-serine, O-phospho-L-serine, L-serine, O-succinyl-L-homoserine and L-homoserine. Shows low CTT beta-lyase activity and very low CTT gamma-synthase activity. The polypeptide is O-acetyl-L-homoserine sulfhydrylase 1 (Thermus thermophilus (strain ATCC 27634 / DSM 579 / HB8)).